The following is a 323-amino-acid chain: Ribokinase (323 aa).

Residues 26–28 (MTD), 54–58 (GKGAN), and Glu-155 each bind substrate. ATP is bound by residues Asn-200, 236–241 (TLGASG), and Thr-257. Asp-264 and Thr-266 together coordinate K(+). ATP is bound by residues 269–270 (GD) and Asn-296. Position 270 (Asp-270) interacts with substrate. Catalysis depends on Asp-270, which acts as the Proton acceptor. 4 residues coordinate K(+): Ser-302, Ala-305, Gly-307, and Ser-311.

Belongs to the carbohydrate kinase PfkB family. Ribokinase subfamily. In terms of assembly, homodimer. Mg(2+) is required as a cofactor.

It localises to the cytoplasm. It is found in the nucleus. The catalysed reaction is D-ribose + ATP = D-ribose 5-phosphate + ADP + H(+). The protein operates within carbohydrate metabolism; D-ribose degradation; D-ribose 5-phosphate from beta-D-ribopyranose: step 2/2. Activated by a monovalent cation that binds near, but not in, the active site. The most likely occupant of the site in vivo is potassium. Ion binding induces a conformational change that may alter substrate affinity. Competitively inhibited by phosphonoacetic acid, etidronate, 2-carboxethylphosphonic acid, N-(phosphonomethyl)glycine, N-(phosphonomethyl)iminodiacetic acid and clodronate. In terms of biological role, catalyzes the phosphorylation of ribose at O-5 in a reaction requiring ATP and magnesium. The resulting D-ribose-5-phosphate can then be used either for sythesis of nucleotides, histidine, and tryptophan, or as a component of the pentose phosphate pathway. In Mus musculus (Mouse), this protein is Ribokinase.